A 311-amino-acid polypeptide reads, in one-letter code: Protein N-terminal asparagine amidohydrolase (311 aa).

Monomer.

The protein resides in the cytoplasm. It catalyses the reaction N-terminal L-asparaginyl-[protein] + H2O + H(+) = N-terminal L-aspartyl-[protein] + NH4(+). Its function is as follows. N-terminal asparagine deamidase that mediates deamidation of N-terminal asparagine residues to aspartate. Required for the ubiquitin-dependent turnover of intracellular proteins that initiate with Met-Asn. These proteins are acetylated on the retained initiator methionine and can subsequently be modified by the removal of N-acetyl methionine by acylaminoacid hydrolase (AAH). Conversion of the resulting N-terminal asparagine to aspartate by NTAN1/PNAD renders the protein susceptible to arginylation, polyubiquitination and degradation as specified by the N-end rule. This enzyme does not act on substrates with internal or C-terminal asparagines and does not act on glutamine residues in any position. The polypeptide is Protein N-terminal asparagine amidohydrolase (NTAN1) (Sus scrofa (Pig)).